A 518-amino-acid chain; its full sequence is Protein nucleotidyltransferase YdiU (518 aa).

The span at 1-10 (MTHLRFDNRL) shows a compositional bias: basic and acidic residues. A disordered region spans residues 1–23 (MTHLRFDNRLRQQLPGDPEEGSR). ATP-binding residues include glycine 100, glycine 102, arginine 103, lysine 123, aspartate 135, glycine 136, arginine 193, and arginine 200. The active-site Proton acceptor is the aspartate 270. The Mg(2+) site is built by asparagine 271 and aspartate 280. Aspartate 280 contributes to the ATP binding site.

This sequence belongs to the SELO family. Mg(2+) serves as cofactor. It depends on Mn(2+) as a cofactor.

The enzyme catalyses L-seryl-[protein] + ATP = 3-O-(5'-adenylyl)-L-seryl-[protein] + diphosphate. It catalyses the reaction L-threonyl-[protein] + ATP = 3-O-(5'-adenylyl)-L-threonyl-[protein] + diphosphate. The catalysed reaction is L-tyrosyl-[protein] + ATP = O-(5'-adenylyl)-L-tyrosyl-[protein] + diphosphate. It carries out the reaction L-histidyl-[protein] + UTP = N(tele)-(5'-uridylyl)-L-histidyl-[protein] + diphosphate. The enzyme catalyses L-seryl-[protein] + UTP = O-(5'-uridylyl)-L-seryl-[protein] + diphosphate. It catalyses the reaction L-tyrosyl-[protein] + UTP = O-(5'-uridylyl)-L-tyrosyl-[protein] + diphosphate. Nucleotidyltransferase involved in the post-translational modification of proteins. It can catalyze the addition of adenosine monophosphate (AMP) or uridine monophosphate (UMP) to a protein, resulting in modifications known as AMPylation and UMPylation. This is Protein nucleotidyltransferase YdiU from Xanthomonas axonopodis pv. citri (strain 306).